Here is a 635-residue protein sequence, read N- to C-terminus: Threonine--tRNA ligase (635 aa).

The TGS domain occupies 1–61 (MIKITLKDGK…HKDSSLEILT (61 aa)). The segment at 242–532 (DHRKLGKELD…LIEQYAGAFP (291 aa)) is catalytic. Zn(2+) contacts are provided by Cys-333, His-384, and His-509.

The protein belongs to the class-II aminoacyl-tRNA synthetase family. In terms of assembly, homodimer. Requires Zn(2+) as cofactor.

The protein localises to the cytoplasm. It catalyses the reaction tRNA(Thr) + L-threonine + ATP = L-threonyl-tRNA(Thr) + AMP + diphosphate + H(+). Its function is as follows. Catalyzes the attachment of threonine to tRNA(Thr) in a two-step reaction: L-threonine is first activated by ATP to form Thr-AMP and then transferred to the acceptor end of tRNA(Thr). Also edits incorrectly charged L-seryl-tRNA(Thr). This is Threonine--tRNA ligase from Clostridium botulinum (strain 657 / Type Ba4).